The sequence spans 194 residues: Molybdenum cofactor guanylyltransferase (194 aa).

GTP contacts are provided by residues 12–14, lysine 25, asparagine 53, aspartate 70, and aspartate 100; that span reads LAG. Aspartate 100 is a binding site for Mg(2+).

The protein belongs to the MobA family. In terms of assembly, monomer. Requires Mg(2+) as cofactor.

It localises to the cytoplasm. The catalysed reaction is Mo-molybdopterin + GTP + H(+) = Mo-molybdopterin guanine dinucleotide + diphosphate. Transfers a GMP moiety from GTP to Mo-molybdopterin (Mo-MPT) cofactor (Moco or molybdenum cofactor) to form Mo-molybdopterin guanine dinucleotide (Mo-MGD) cofactor. This Aliivibrio salmonicida (strain LFI1238) (Vibrio salmonicida (strain LFI1238)) protein is Molybdenum cofactor guanylyltransferase.